We begin with the raw amino-acid sequence, 96 residues long: Protein Vpr (96 aa).

The tract at residues 1 to 42 is homooligomerization; that stretch reads MEQAPEDQGPQREPYNEWTLELLEELKSEAVRHFPRIWLHNL. A phosphoserine; by host mark is found at Ser-79, Ser-94, and Ser-96.

It belongs to the HIV-1 VPR protein family. Homooligomer, may form homodimer. Interacts with p6-gag region of the Pr55 Gag precursor protein through a (Leu-X-X)4 motif near the C-terminus of the P6gag protein. Interacts with host UNG. May interact with host RAD23A/HHR23A. Interacts with host VPRBP/DCAF1, leading to hijack the CUL4A-RBX1-DDB1-DCAF1/VPRBP complex, mediating ubiquitination of host proteins such as TERT and ZGPAT and arrest of the cell cycle in G2 phase. Post-translationally, phosphorylated on several residues by host. These phosphorylations regulate VPR activity for the nuclear import of the HIV-1 pre-integration complex.

The protein localises to the virion. Its subcellular location is the host nucleus. It localises to the host extracellular space. Functionally, during virus replication, may deplete host UNG protein, and incude G2-M cell cycle arrest. Acts by targeting specific host proteins for degradation by the 26S proteasome, through association with the cellular CUL4A-DDB1 E3 ligase complex by direct interaction with host VPRPB/DCAF-1. Cell cycle arrest reportedly occurs within hours of infection and is not blocked by antiviral agents, suggesting that it is initiated by the VPR carried into the virion. Additionally, VPR induces apoptosis in a cell cycle dependent manner suggesting that these two effects are mechanistically linked. Detected in the serum and cerebrospinal fluid of AIDS patient, VPR may also induce cell death to bystander cells. In terms of biological role, during virus entry, plays a role in the transport of the viral pre-integration (PIC) complex to the host nucleus. This function is crucial for viral infection of non-dividing macrophages. May act directly at the nuclear pore complex, by binding nucleoporins phenylalanine-glycine (FG)-repeat regions. The protein is Protein Vpr of Homo sapiens (Human).